The sequence spans 320 residues: GTP 3',8-cyclase (320 aa).

A Radical SAM core domain is found at 5–225; sequence QFDRKINYLR…IQLIKKDEKA (221 aa). Residue Arg14 coordinates GTP. [4Fe-4S] cluster contacts are provided by Cys21 and Cys25. Residue Tyr27 participates in S-adenosyl-L-methionine binding. Cys28 contacts [4Fe-4S] cluster. A GTP-binding site is contributed by Arg64. S-adenosyl-L-methionine is bound at residue Gly68. Residue Thr95 coordinates GTP. Ser119 serves as a coordination point for S-adenosyl-L-methionine. Lys155 contacts GTP. Met189 provides a ligand contact to S-adenosyl-L-methionine. Residues Cys248 and Cys251 each coordinate [4Fe-4S] cluster. Residue 253-255 participates in GTP binding; sequence RIR. Residue Cys265 participates in [4Fe-4S] cluster binding.

Belongs to the radical SAM superfamily. MoaA family. Monomer and homodimer. [4Fe-4S] cluster serves as cofactor.

The catalysed reaction is GTP + AH2 + S-adenosyl-L-methionine = (8S)-3',8-cyclo-7,8-dihydroguanosine 5'-triphosphate + 5'-deoxyadenosine + L-methionine + A + H(+). It participates in cofactor biosynthesis; molybdopterin biosynthesis. Functionally, catalyzes the cyclization of GTP to (8S)-3',8-cyclo-7,8-dihydroguanosine 5'-triphosphate. This chain is GTP 3',8-cyclase, found in Campylobacter jejuni subsp. doylei (strain ATCC BAA-1458 / RM4099 / 269.97).